Here is a 465-residue protein sequence, read N- to C-terminus: Ribulose bisphosphate carboxylase large chain (465 aa).

Lys-4 bears the N6,N6,N6-trimethyllysine mark. Residues Asn-113 and Thr-163 each contribute to the substrate site. Lys-165 (proton acceptor) is an active-site residue. Lys-167 is a binding site for substrate. Mg(2+)-binding residues include Lys-191, Asp-193, and Glu-194. Position 191 is an N6-carboxylysine (Lys-191). Catalysis depends on His-284, which acts as the Proton acceptor. Arg-285, His-317, and Ser-369 together coordinate substrate.

Belongs to the RuBisCO large chain family. Type I subfamily. In terms of assembly, heterohexadecamer of 8 large chains and 8 small chains; disulfide-linked. The disulfide link is formed within the large subunit homodimers. Mg(2+) is required as a cofactor. Post-translationally, the disulfide bond which can form in the large chain dimeric partners within the hexadecamer appears to be associated with oxidative stress and protein turnover.

It localises to the plastid. It is found in the chloroplast. It carries out the reaction 2 (2R)-3-phosphoglycerate + 2 H(+) = D-ribulose 1,5-bisphosphate + CO2 + H2O. It catalyses the reaction D-ribulose 1,5-bisphosphate + O2 = 2-phosphoglycolate + (2R)-3-phosphoglycerate + 2 H(+). Its function is as follows. RuBisCO catalyzes two reactions: the carboxylation of D-ribulose 1,5-bisphosphate, the primary event in carbon dioxide fixation, as well as the oxidative fragmentation of the pentose substrate in the photorespiration process. Both reactions occur simultaneously and in competition at the same active site. The protein is Ribulose bisphosphate carboxylase large chain of Clitoria ternatea (Butterfly pea).